A 357-amino-acid chain; its full sequence is UDP-N-acetylglucosamine--N-acetylmuramyl-(pentapeptide) pyrophosphoryl-undecaprenol N-acetylglucosamine transferase (357 aa).

Residues arginine 166, serine 196, and glutamine 290 each contribute to the UDP-N-acetyl-alpha-D-glucosamine site.

It belongs to the glycosyltransferase 28 family. MurG subfamily.

The protein localises to the cell membrane. The enzyme catalyses Mur2Ac(oyl-L-Ala-gamma-D-Glu-L-Lys-D-Ala-D-Ala)-di-trans,octa-cis-undecaprenyl diphosphate + UDP-N-acetyl-alpha-D-glucosamine = beta-D-GlcNAc-(1-&gt;4)-Mur2Ac(oyl-L-Ala-gamma-D-Glu-L-Lys-D-Ala-D-Ala)-di-trans,octa-cis-undecaprenyl diphosphate + UDP + H(+). It functions in the pathway cell wall biogenesis; peptidoglycan biosynthesis. Its function is as follows. Cell wall formation. Catalyzes the transfer of a GlcNAc subunit on undecaprenyl-pyrophosphoryl-MurNAc-pentapeptide (lipid intermediate I) to form undecaprenyl-pyrophosphoryl-MurNAc-(pentapeptide)GlcNAc (lipid intermediate II). The sequence is that of UDP-N-acetylglucosamine--N-acetylmuramyl-(pentapeptide) pyrophosphoryl-undecaprenol N-acetylglucosamine transferase from Staphylococcus epidermidis (strain ATCC 35984 / DSM 28319 / BCRC 17069 / CCUG 31568 / BM 3577 / RP62A).